Consider the following 459-residue polypeptide: MLTQEIIIVILAAGKGTRMKSNHPKVLHFLGGKTILEHVIETAQSIKPKKIILVYSDQKKPVLSNIYNIPIQWIIQKKPQGTGHAILLAIKKISDNTEILVLYGDVPFISPVSIKKLQKSKKQSKISLLTAKVKNPNGYGRILRKKGKVISIIEDQDASNEQKNIKEIYSGIFIAQSKDLTRWLKKIDKKNEKQEFYATDIIALAHLEGSFIKTIEPLNYEEILGINNKLQLSNLEKIFQKKQINKLLINGVTIKDPSHFIFRGTLQHGQNVEIDTGVILENNVILGDDVKIGPGCIIRNSSIDSNTNIQAYTIIENSKIGKGCIIGPFAHLRSNTLLDRNVHIGNFVETKDTFIKNESKVKHLSYLGNSEIGSKVNIGAGSITCNYDGANKFKTIIGDNVLVGSNTQLIAPIKIAKNTTIAAGTTVTKDVNTPCLVYNTKEQKYKKNWMRSKKIIKKN.

A pyrophosphorylase region spans residues 1 to 229 (MLTQEIIIVI…YEEILGINNK (229 aa)). UDP-N-acetyl-alpha-D-glucosamine contacts are provided by residues 11-14 (LAAG), lysine 25, glutamine 76, 81-82 (GT), 103-105 (YGD), glycine 140, glutamate 154, and asparagine 227. A Mg(2+)-binding site is contributed by aspartate 105. Asparagine 227 is a binding site for Mg(2+). Positions 230 to 250 (LQLSNLEKIFQKKQINKLLIN) are linker. Residues 251–459 (GVTIKDPSHF…MRSKKIIKKN (209 aa)) are N-acetyltransferase. Residues arginine 333 and lysine 351 each coordinate UDP-N-acetyl-alpha-D-glucosamine. The active-site Proton acceptor is histidine 363. Tyrosine 366 and asparagine 377 together coordinate UDP-N-acetyl-alpha-D-glucosamine. Acetyl-CoA-binding positions include alanine 380, 386 to 387 (NY), serine 405, and alanine 423.

The protein in the N-terminal section; belongs to the N-acetylglucosamine-1-phosphate uridyltransferase family. In the C-terminal section; belongs to the transferase hexapeptide repeat family. In terms of assembly, homotrimer. The cofactor is Mg(2+).

The protein resides in the cytoplasm. The enzyme catalyses alpha-D-glucosamine 1-phosphate + acetyl-CoA = N-acetyl-alpha-D-glucosamine 1-phosphate + CoA + H(+). It carries out the reaction N-acetyl-alpha-D-glucosamine 1-phosphate + UTP + H(+) = UDP-N-acetyl-alpha-D-glucosamine + diphosphate. It functions in the pathway nucleotide-sugar biosynthesis; UDP-N-acetyl-alpha-D-glucosamine biosynthesis; N-acetyl-alpha-D-glucosamine 1-phosphate from alpha-D-glucosamine 6-phosphate (route II): step 2/2. The protein operates within nucleotide-sugar biosynthesis; UDP-N-acetyl-alpha-D-glucosamine biosynthesis; UDP-N-acetyl-alpha-D-glucosamine from N-acetyl-alpha-D-glucosamine 1-phosphate: step 1/1. It participates in bacterial outer membrane biogenesis; LPS lipid A biosynthesis. Functionally, catalyzes the last two sequential reactions in the de novo biosynthetic pathway for UDP-N-acetylglucosamine (UDP-GlcNAc). The C-terminal domain catalyzes the transfer of acetyl group from acetyl coenzyme A to glucosamine-1-phosphate (GlcN-1-P) to produce N-acetylglucosamine-1-phosphate (GlcNAc-1-P), which is converted into UDP-GlcNAc by the transfer of uridine 5-monophosphate (from uridine 5-triphosphate), a reaction catalyzed by the N-terminal domain. In Buchnera aphidicola subsp. Acyrthosiphon pisum (strain 5A), this protein is Bifunctional protein GlmU.